The sequence spans 537 residues: 5,6-dihydroxyindole-2-carboxylic acid oxidase (537 aa).

The first 24 residues, 1–24 (MSAPKLLSLGCIFFPLLLFQQARA), serve as a signal peptide directing secretion. Topologically, residues 25–477 (QFPRQCATVE…WPSREFSVPE (453 aa)) are lumenal, melanosome. Cystine bridges form between Cys30/Cys41, Cys42/Cys65, Cys56/Cys99, Cys101/Cys110, and Cys113/Cys122. N-linked (GlcNAc...) asparagine glycans are attached at residues Asn96 and Asn104. Asn181 carries an N-linked (GlcNAc...) asparagine glycan. His192, His215, and His224 together coordinate Zn(2+). Cystine bridges form between Cys258–Cys261 and Cys290–Cys303. N-linked (GlcNAc...) asparagine glycans are attached at residues Asn304 and Asn350. His377 and His381 together coordinate Zn(2+). Asn385 is a glycosylation site (N-linked (GlcNAc...) asparagine). Position 404 (His404) interacts with Zn(2+). A helical transmembrane segment spans residues 478–501 (IIAIAVVGALLLVALIFGTASYLI). The Cytoplasmic segment spans residues 502–537 (RARRSMDEANQPLLTDQYQCYAEEYEKLQNPNQSVV).

This sequence belongs to the tyrosinase family. As to quaternary structure, monomer. Interacts with ATP7A. Interacts with SLC45A2. Cu(2+) serves as cofactor. The cofactor is Zn(2+). In terms of processing, glycosylated. Pigment cells.

Its subcellular location is the melanosome membrane. It catalyses the reaction 2 5,6-dihydroxyindole-2-carboxylate + O2 = 2 indole-5,6-quinone-2-carboxylate + 2 H2O. It participates in pigment biosynthesis; melanin biosynthesis. The activity depends critically on the nature of the bound metal ion. Catalyzes the oxidation of 5,6-dihydroxyindole-2-carboxylic acid (DHICA) in the presence of bound Cu(2+) ions, but lacks activity in the presence of bound Zn(2+) ions. Its function is as follows. Plays a role in melanin biosynthesis. Catalyzes the oxidation of 5,6-dihydroxyindole-2-carboxylic acid (DHICA) into indole-5,6-quinone-2-carboxylic acid in the presence of bound Cu(2+) ions, but not in the presence of Zn(2+). May regulate or influence the type of melanin synthesized. Also to a lower extent, capable of hydroxylating tyrosine and producing melanin. The polypeptide is 5,6-dihydroxyindole-2-carboxylic acid oxidase (Homo sapiens (Human)).